A 212-amino-acid polypeptide reads, in one-letter code: Troponin I, cardiac muscle (212 aa).

The segment covering 1–11 (MADRSGGSTAG) has biased composition (polar residues). Residues 1-45 (MADRSGGSTAGDTVPAPPPVRRRSSANYRAYATEPHAKKKSKISA) are disordered. Position 2 is an N-acetylalanine (Ala2). Ser5 is subject to Phosphoserine. Phosphoserine; by PKA and PKD/PRKD1 is present on residues Ser24 and Ser25. Position 28 is a phosphotyrosine (Tyr28). Thr33 bears the Phosphothreonine; by STK4/MST1 mark. The interval 34-81 (EPHAKKKSKISASRKLQLKTLMLQIAKQELEREAEERRGEKGRALSTR) is involved in binding TNC. A phosphoserine; by PKC/PRKCE mark is found at Ser44 and Ser46. Thr53 bears the Phosphothreonine; by STK4/MST1 mark. Ser79 carries the post-translational modification Phosphoserine. Phosphothreonine is present on Thr80. An involved in binding TNC and actin region spans residues 131–151 (NQKIFDLRGKFKRPTLRRVRI). Thr145 carries the phosphothreonine; by STK4/MST1 modification. Phosphoserine; by PAK3 is present on Ser152. Thr183 bears the Phosphothreonine mark. A Phosphoserine modification is found at Ser201.

This sequence belongs to the troponin I family. Interacts with TRIM63. Binds to actin and tropomyosin. Interacts with STK4/MST1. In terms of processing, phosphorylated at Ser-24 and Ser-25 by PRKD1; phosphorylation reduces myofilament calcium sensitivity. Phosphorylated preferentially at Thr-33. Phosphorylation by STK4/MST1 alters its binding affinity to TNNC1 (cardiac Tn-C) and TNNT2 (cardiac Tn-T). Phosphorylated at Ser-44 and Ser-46 by PRKCE; phosphorylation increases myocardium contractile dysfunction.

Functionally, troponin I is the inhibitory subunit of troponin, the thin filament regulatory complex which confers calcium-sensitivity to striated muscle actomyosin ATPase activity. The polypeptide is Troponin I, cardiac muscle (TNNI3) (Bos taurus (Bovine)).